A 520-amino-acid chain; its full sequence is tRNA (guanine-N(7)-)-methyltransferase non-catalytic subunit TRM82 (520 aa).

The disordered stretch occupies residues 51–102 (PLDSEISPDRASSAGTCAEPPEKRRKLTPPVDESGEAQTEQSAKAKARKSQT). WD repeat units follow at residues 105 to 145 (QAWS…KLTQ), 244 to 291 (GHVS…HIIH), and 296 to 338 (GHTS…QTIP).

Belongs to the WD repeat TRM82 family. Forms a heterodimer with the catalytic subunit TRM8.

It localises to the nucleus. Its pathway is tRNA modification; N(7)-methylguanine-tRNA biosynthesis. Functionally, required for the formation of N(7)-methylguanine at position 46 (m7G46) in tRNA. In the complex, it is required to stabilize and induce conformational changes of the catalytic subunit. This Coccidioides immitis (strain RS) (Valley fever fungus) protein is tRNA (guanine-N(7)-)-methyltransferase non-catalytic subunit TRM82.